The primary structure comprises 147 residues: Large ribosomal subunit protein bL21 (147 aa).

The interval 125–147 (EEVEAAPKAKKAAPKAKKEATKE) is disordered.

The protein belongs to the bacterial ribosomal protein bL21 family. In terms of assembly, part of the 50S ribosomal subunit. Contacts protein L20.

Its function is as follows. This protein binds to 23S rRNA in the presence of protein L20. This is Large ribosomal subunit protein bL21 from Flavobacterium johnsoniae (strain ATCC 17061 / DSM 2064 / JCM 8514 / BCRC 14874 / CCUG 350202 / NBRC 14942 / NCIMB 11054 / UW101) (Cytophaga johnsonae).